Consider the following 631-residue polypeptide: MATQSFSVAPSVQWTERDATLQTSPSVVVQGATVGKFQWGEVELPVLVTGGETGLVKKFFKPNDSTATDFLVIADFLSYSSMAWVTRVVGPLAKNSVTKGQTAITIKNKLDFETASPSASITWAGRYPGSLGNDIAINVCDSAGFPTWEFRNNFAYAPQSGEFHVVVVDKVGRITDSAGAVGQVDRISVSGTATAAGTISVAGEDIAYLDTDTPATLATKIGAALTALTDVYSSVVVKSNTVIVTHKAIGPQTVTAIVPDDKGLTATAVITTVGASGSIIEKYELMQNTQGSKKSDGANAYFKDVINDTSNWVYTFATALAAGVVELEGGVDDYNINRVAAIQVLNNAEAYDAKPVFAYCEELIEQQALIDLSTERKDTVSFVSPLRDTVVGNRGREMDDVVSWRESLVRDSSYFFMDDNWAYVYDKYNDKMRWIPACGGTAGVWARSIEIAGIYKSPAFHNRGKYNNYNRMAWSASSDERAVLYRNQINSIVTFSNEGIVLYGDKTGLTRPSAFDRINVRGLFIMAEQNIAAIAKYYLGENNDAFTRSLFSNAVRPYIRQLANMGAIYDGKVKCDEDNNTADVIAANQMVAGIWLKPEYSINWVYLDFAAVRPDMEFSEIESGGGIVAAS.

It belongs to the myoviridae tail sheath protein family. Homomultimer.

The protein localises to the virion. It localises to the host cytoplasm. Polymerizes as an extended structure around the baseplate-tail tube complex. During ejection, the sheath shifts to a contracted form, thereby making the inner tail tube protrude through the host cell envelope. In Salmonella typhi, this protein is Tail sheath protein.